The primary structure comprises 81 residues: Acyl carrier protein (81 aa).

The region spanning 4-79 (AEIKDKVYDI…QAIDYIVNKK (76 aa)) is the Carrier domain. Ser39 carries the post-translational modification O-(pantetheine 4'-phosphoryl)serine.

This sequence belongs to the acyl carrier protein (ACP) family. 4'-phosphopantetheine is transferred from CoA to a specific serine of apo-ACP by AcpS. This modification is essential for activity because fatty acids are bound in thioester linkage to the sulfhydryl of the prosthetic group.

It localises to the cytoplasm. The protein operates within lipid metabolism; fatty acid biosynthesis. Functionally, carrier of the growing fatty acid chain in fatty acid biosynthesis. In Chlorobaculum tepidum (strain ATCC 49652 / DSM 12025 / NBRC 103806 / TLS) (Chlorobium tepidum), this protein is Acyl carrier protein.